The following is a 257-amino-acid chain: MLAVLSPAKRLAAQPALDLPADLAPSEPRLQDQADALARVARDLTAADLRRLMHISEPLARLNVARFAEFHEARNAAVPAVALFDGDTYAGLEARTMDADALRWAQERICILSGLYGLLRPLDRIQPHRLEMGTRLATERGATLYDFWGDRIAEALNARAAETGARVLVNCASVEYFTAADRAALKLPVITPTFLEERNGERKIVSFWAKRARGAMARFIAENRLDDPEDLRAFRAGGYAYEPDLSTDERPVFLRAG.

It belongs to the UPF0246 family.

This is UPF0246 protein RHOS4_29700 from Cereibacter sphaeroides (strain ATCC 17023 / DSM 158 / JCM 6121 / CCUG 31486 / LMG 2827 / NBRC 12203 / NCIMB 8253 / ATH 2.4.1.) (Rhodobacter sphaeroides).